The following is a 903-amino-acid chain: Alanine--tRNA ligase (903 aa).

The Zn(2+) site is built by His-591, His-595, Cys-695, and His-699.

This sequence belongs to the class-II aminoacyl-tRNA synthetase family. Requires Zn(2+) as cofactor.

It localises to the cytoplasm. It carries out the reaction tRNA(Ala) + L-alanine + ATP = L-alanyl-tRNA(Ala) + AMP + diphosphate. Functionally, catalyzes the attachment of alanine to tRNA(Ala) in a two-step reaction: alanine is first activated by ATP to form Ala-AMP and then transferred to the acceptor end of tRNA(Ala). Also edits incorrectly charged Ser-tRNA(Ala) and Gly-tRNA(Ala) via its editing domain. This Methanosphaera stadtmanae (strain ATCC 43021 / DSM 3091 / JCM 11832 / MCB-3) protein is Alanine--tRNA ligase.